Reading from the N-terminus, the 1222-residue chain is ATP-dependent helicase/nuclease subunit A (1222 aa).

The UvrD-like helicase ATP-binding domain occupies 39–495 (QKRTAQQIEA…ILLKENFRSQ (457 aa)). 60–67 (ASAGSGKT) lines the ATP pocket. The 287-residue stretch at 524-810 (QLIAGSHAQT…NLMTIHKSKG (287 aa)) folds into the UvrD-like helicase C-terminal domain.

It belongs to the helicase family. AddA subfamily. As to quaternary structure, heterodimer of AddA and AddB/RexB. The cofactor is Mg(2+).

It carries out the reaction Couples ATP hydrolysis with the unwinding of duplex DNA by translocating in the 3'-5' direction.. It catalyses the reaction ATP + H2O = ADP + phosphate + H(+). In terms of biological role, the heterodimer acts as both an ATP-dependent DNA helicase and an ATP-dependent, dual-direction single-stranded exonuclease. Recognizes the chi site generating a DNA molecule suitable for the initiation of homologous recombination. The AddA nuclease domain is required for chi fragment generation; this subunit has the helicase and 3' -&gt; 5' nuclease activities. The protein is ATP-dependent helicase/nuclease subunit A of Streptococcus pyogenes serotype M3 (strain ATCC BAA-595 / MGAS315).